Consider the following 591-residue polypeptide: Solute carrier family 40 member 2, chloroplastic (591 aa).

The N-terminal 66 residues, 1–66 (MGMVTATAAA…RCYITNVEVD (66 aa)), are a transit peptide targeting the chloroplast. 11 consecutive transmembrane segments (helical) span residues 159–179 (WPAALAILHPSLLPVAIVGFF), 206–226 (GLNAVQVATQLISAAMVIYAM), 242–262 (WFIALVAAGAIERLAGLALGV), 293–313 (LVCETVGASVFGLLLSKYHPV), 318–338 (IACGLMICSFPVLVVLGQLIN), 391–411 (VATVFLNFNVALAPGAIMTAL), 419–439 (PSIVGAFSGLCSIMGLVATFI), 452–472 (AGAAGLIVQASLLSVALVVYW), 482–502 (LLIFLAAIALSRLGHMSYDVV), 518–540 (LIGGMEVSISSLAELVMLGMAII), and 547–569 (FGFLAILSVSSVAGAAWMFCQWL).

It belongs to the ferroportin (FP) (TC 2.A.100) family. SLC40A subfamily.

It localises to the membrane. The protein localises to the plastid. The protein resides in the chloroplast envelope. Functionally, may be involved in iron transport and iron homeostasis. The sequence is that of Solute carrier family 40 member 2, chloroplastic from Oryza sativa subsp. japonica (Rice).